The primary structure comprises 3418 residues: Breast cancer type 2 susceptibility protein (3418 aa).

Residues 1–40 are interaction with PALB2; that stretch reads MPIGSKERPTFFEIFKTRCNKADLGPISLNWFEELSSEAP. Residues 37 to 68 are disordered; the sequence is SEAPPYNSEPAEESEHKNNNYEPNLFKTPQRK. Ser-70 bears the Phosphoserine mark. Residues 358 to 381 form a disordered region; it reads VEPNDTDPLDSNVANQKPFESGSD. 3 positions are modified to phosphoserine: Ser-445, Ser-492, and Ser-755. The segment at 639-1000 is interaction with NPM1; it reads LHSSVKRSCS…NKWAGLLGPI (362 aa). BRCA2 repeat units lie at residues 1002–1036, 1212–1246, 1421–1455, 1517–1551, 1664–1698, and 1837–1871; these read NHSFGGSFRTASNKEIKLSEHNIKKSKMFFKDIEE, NEVGFRGFYSAHGTKLNVSTEALQKAVKLFSDIEN, FETSDTFFQTASGKNISVAKESFNKIVNFFDQKPE, KEPTLLGFHTASGKKVKIAKESLDKVKNLFDEKEQ, IENSALAFYTSCSRKTSVSQTSLLEAKKWLREGIF, and FEVGPPAFRIASGKIVCVSHETIKKVKDIFTDSFS. An interaction with RAD51 region spans residues 1003-2082; that stretch reads HSFGGSFRTA…LHKVKGVLEE (1080 aa). The interval 1338–1781 is interaction with POLH; that stretch reads GSDSSKNDTV…IEPVLKNVED (444 aa). The tract at residues 1410–1595 is required for stimulation of POLH DNA polymerization activity; the sequence is TATKTEQNIK…TAAPKCKEMQ (186 aa). Position 1970 is a phosphoserine (Ser-1970). The BRCA2 7 repeat unit spans residues 1971–2005; it reads SANTCGIFSTASGKSVQVSDASLQNARQVFSEIED. Thr-2035 bears the Phosphothreonine mark. Residues 2051 to 2085 form a BRCA2 8 repeat; sequence NSSAFSGFSTASGKQVSILESSLHKVKGVLEEFDL. Phosphoserine is present on Ser-2095. The interval 2270-2337 is interaction with HSF2BP; it reads GKRRGEPLIL…EPITCVPFRT (68 aa). The interaction with FANCD2 stretch occupies residues 2350–2545; the sequence is TAPGQEFLSK…SHKQLYTYGV (196 aa). Positions 2430-2450 are disordered; it reads ENRQKQNIDGHGSDDSKNKIN. An interaction with SEM1 region spans residues 2481-2832; the sequence is ITSLQNARDI…QRAYPIQWME (352 aa). The Nuclear export signal; masked by interaction with SEM1 signature appears at 2682–2698; the sequence is AAKTLVLCVSDIISLSA. The residue at position 3291 (Ser-3291) is a Phosphoserine; by CDK1 and CDK2. Ser-3319 carries the post-translational modification Phosphoserine. Thr-3387 carries the post-translational modification Phosphothreonine; by CHEK1 and CHEK2. The segment at 3393-3418 is disordered; that stretch reads EQESSQASTEECEKNKQDTITTKKYI.

Monomer and dimer. Interacts with RAD51; regulates RAD51 recruitment and function at sites of DNA repair. Interacts with WDR16, USP11, DMC1, ROCK2 and NPM1. Interacts with SEM1; the interaction masks a nuclear export signal in BRCA2. Interacts with both nonubiquitinated and monoubiquitinated FANCD2; this complex also includes XRCC3 and phosphorylated FANCG. Part of a BRCA complex containing BRCA1, BRCA2 and PALB2. Component of the homologous recombination repair (HR) complex composed of ERCC5/XPG, BRCA2, PALB2, DSS1 and RAD51. Within the complex, interacts with ERCC5/XPG and PALB2. Interacts directly with PALB2 which may serve as a scaffold for a HR complex containing PALB2, BRCA2, RAD51C, RAD51 and XRCC3. Interacts with BRCA1 only in the presence of PALB2 which serves as the bridging protein. Interacts with POLH; the interaction is direct. Interacts with the TREX-2 complex subunits PCID2 and SEM1. Interacts with HSF2BP and BRME1; the interaction with HSF2BP is direct and allows the formation of a ternary complex. The complex BRME1:HSF2BP:BRCA2 interacts with SPATA22, MEIOB and RAD51. Phosphorylated by ATM upon irradiation-induced DNA damage. Phosphorylation by CHEK1 and CHEK2 regulates interaction with RAD51. Phosphorylation at Ser-3291 by CDK1 and CDK2 is low in S phase when recombination is active, but increases as cells progress towards mitosis; this phosphorylation prevents homologous recombination-dependent repair during S phase and G2 by inhibiting RAD51 binding. Post-translationally, ubiquitinated in the absence of DNA damage; this does not lead to proteasomal degradation. In contrast, ubiquitination in response to DNA damage leads to proteasomal degradation. As to expression, highest levels of expression in breast and thymus, with slightly lower levels in lung, ovary and spleen.

The protein resides in the nucleus. The protein localises to the cytoplasm. It localises to the cytoskeleton. It is found in the microtubule organizing center. Its subcellular location is the centrosome. In terms of biological role, involved in double-strand break repair and/or homologous recombination. Binds RAD51 and potentiates recombinational DNA repair by promoting assembly of RAD51 onto single-stranded DNA (ssDNA). Acts by targeting RAD51 to ssDNA over double-stranded DNA, enabling RAD51 to displace replication protein-A (RPA) from ssDNA and stabilizing RAD51-ssDNA filaments by blocking ATP hydrolysis. Part of a PALB2-scaffolded HR complex containing RAD51C and which is thought to play a role in DNA repair by HR. May participate in S phase checkpoint activation. Binds selectively to ssDNA, and to ssDNA in tailed duplexes and replication fork structures. May play a role in the extension step after strand invasion at replication-dependent DNA double-strand breaks; together with PALB2 is involved in both POLH localization at collapsed replication forks and DNA polymerization activity. In concert with NPM1, regulates centrosome duplication. Interacts with the TREX-2 complex (transcription and export complex 2) subunits PCID2 and SEM1, and is required to prevent R-loop-associated DNA damage and thus transcription-associated genomic instability. Silencing of BRCA2 promotes R-loop accumulation at actively transcribed genes in replicating and non-replicating cells, suggesting that BRCA2 mediates the control of R-loop associated genomic instability, independently of its known role in homologous recombination. The polypeptide is Breast cancer type 2 susceptibility protein (Homo sapiens (Human)).